A 346-amino-acid chain; its full sequence is DNA-directed RNA polymerase subunit alpha (346 aa).

Residues 1–243 (MTMNNPNLTM…EQLSIWVNFE (243 aa)) are alpha N-terminal domain (alpha-NTD). The interval 260 to 346 (LNENLFRSVE…ERWKAQQAQA (87 aa)) is alpha C-terminal domain (alpha-CTD).

Belongs to the RNA polymerase alpha chain family. Homodimer. The RNAP catalytic core consists of 2 alpha, 1 beta, 1 beta' and 1 omega subunit. When a sigma factor is associated with the core the holoenzyme is formed, which can initiate transcription.

The enzyme catalyses RNA(n) + a ribonucleoside 5'-triphosphate = RNA(n+1) + diphosphate. In terms of biological role, DNA-dependent RNA polymerase catalyzes the transcription of DNA into RNA using the four ribonucleoside triphosphates as substrates. This is DNA-directed RNA polymerase subunit alpha from Sorangium cellulosum (strain So ce56) (Polyangium cellulosum (strain So ce56)).